A 315-amino-acid polypeptide reads, in one-letter code: Microtubule-associated protein Jupiter (315 aa).

Residues 1–14 are compositionally biased toward polar residues; sequence MISNFDCTDNQASS. Disordered regions lie at residues 1 to 37 and 51 to 89; these read MISNFDCTDNQASSKVLRPPGGGSSDIFGSEMPQTPR and EKDNGVKNNGDAPRRGQKTVDSHSRLFGEPTRPITPGKN. Ser24 is modified (phosphoserine). Position 35 is a phosphothreonine (Thr35). Residues 62-76 are compositionally biased toward basic and acidic residues; it reads APRRGQKTVDSHSRL. A phosphothreonine mark is found at Thr81 and Thr85. A phosphoserine mark is found at Ser94, Ser122, and Ser133. Disordered stretches follow at residues 116–166 and 272–315; these read YNGK…ADDA and EGNP…SGLW. A compositionally biased stretch (low complexity) spans 120 to 133; that stretch reads SGSVSSASSSVSSS. 2 stretches are compositionally biased toward polar residues: residues 134-148 and 285-296; these read TENLKMNSGSRSVFR and DFTQRQESSNGG.

This sequence belongs to the MAP Jupiter family.

The protein resides in the nucleus. It is found in the cytoplasm. The protein localises to the cytoskeleton. It localises to the spindle. Functionally, binds to all microtubule populations. In Drosophila sechellia (Fruit fly), this protein is Microtubule-associated protein Jupiter.